Here is a 557-residue protein sequence, read N- to C-terminus: Coiled-coil domain-containing protein 22 homolog (557 aa).

Coiled coils occupy residues 260–350 and 489–554; these read RLGQ…LQSQ and ELTA…AGRN.

This sequence belongs to the CCDC22 family.

This is Coiled-coil domain-containing protein 22 homolog from Anopheles gambiae (African malaria mosquito).